A 252-amino-acid polypeptide reads, in one-letter code: Trans-aconitate 2-methyltransferase (252 aa).

The protein belongs to the methyltransferase superfamily. Tam family.

The protein localises to the cytoplasm. It carries out the reaction trans-aconitate + S-adenosyl-L-methionine = (E)-3-(methoxycarbonyl)pent-2-enedioate + S-adenosyl-L-homocysteine. In terms of biological role, catalyzes the S-adenosylmethionine monomethyl esterification of trans-aconitate. The chain is Trans-aconitate 2-methyltransferase from Escherichia fergusonii (strain ATCC 35469 / DSM 13698 / CCUG 18766 / IAM 14443 / JCM 21226 / LMG 7866 / NBRC 102419 / NCTC 12128 / CDC 0568-73).